The following is a 157-amino-acid chain: Nascent polypeptide-associated complex subunit beta (157 aa).

Residues methionine 1–lysine 28 are disordered. In terms of domain architecture, NAC-A/B spans glutamate 33 to isoleucine 98. The segment at lysine 124–glutamate 157 is disordered.

This sequence belongs to the NAC-beta family. In terms of assembly, part of the nascent polypeptide-associated complex (NAC), consisting of EGD2 and EGD1. NAC associates with ribosomes via EGD1.

It localises to the cytoplasm. The protein localises to the nucleus. Functionally, component of the nascent polypeptide-associated complex (NAC), a dynamic component of the ribosomal exit tunnel, protecting the emerging polypeptides from interaction with other cytoplasmic proteins to ensure appropriate nascent protein targeting. The NAC complex also promotes mitochondrial protein import by enhancing productive ribosome interactions with the outer mitochondrial membrane and blocks the inappropriate interaction of ribosomes translating non-secretory nascent polypeptides with translocation sites in the membrane of the endoplasmic reticulum. EGD1 may act as a transcription factor that exert a negative effect on the expression of several genes that are transcribed by RNA polymerase II. This Candida albicans (strain SC5314 / ATCC MYA-2876) (Yeast) protein is Nascent polypeptide-associated complex subunit beta (EGD1).